We begin with the raw amino-acid sequence, 333 residues long: Sphingomyelinase C (333 aa).

An N-terminal signal peptide occupies residues 1–27; it reads MKGKLLKGVLSFGIGLGVLYGGSSVQA. Residues C150 and C186 are joined by a disulfide bond.

Belongs to the neutral sphingomyelinase family. It depends on Mg(2+) as a cofactor.

The protein localises to the secreted. The enzyme catalyses a sphingomyelin + H2O = phosphocholine + an N-acylsphing-4-enine + H(+). Its activity is regulated as follows. Activated by cobalt and manganese ions. Required, with sphingomyelinase, to effect target cell lysis (hemolysis). The polypeptide is Sphingomyelinase C (sph) (Bacillus cereus).